The primary structure comprises 146 residues: MAPRADKKPAEKKPGAEKTPVAEKAPAEKKPRAGKKLPRDAGAAGDKKKKRAEMSVETYKIYIFRVLKHVHPDIGISSKAMGIMNSFINDIFEKLARESSRLAGYNKKPTISSREIQTAVRLVLPGELAKHAVSEGTKAVTKFTSS.

Positions 1–16 (MAPRADKKPAEKKPGA) are enriched in basic and acidic residues. A disordered region spans residues 1–52 (MAPRADKKPAEKKPGAEKTPVAEKAPAEKKPRAGKKLPRDAGAAGDKKKKRA). N6-acetyllysine occurs at positions 7, 35, and 36. A Glycyl lysine isopeptide (Lys-Gly) (interchain with G-Cter in ubiquitin) cross-link involves residue Lys142.

It belongs to the histone H2B family. The nucleosome is a histone octamer containing two molecules each of H2A, H2B, H3 and H4 assembled in one H3-H4 heterotetramer and two H2A-H2B heterodimers. The octamer wraps approximately 147 bp of DNA. In terms of processing, can be acetylated to form H2BK6ac, H2BK33ac and H2BK34ac. Post-translationally, monoubiquitinated to form H2BK143ub1; may give a specific tag for epigenetic transcriptional activation.

Its subcellular location is the nucleus. The protein localises to the chromosome. In terms of biological role, core component of nucleosome. Nucleosomes wrap and compact DNA into chromatin, limiting DNA accessibility to the cellular machineries which require DNA as a template. Histones thereby play a central role in transcription regulation, DNA repair, DNA replication and chromosomal stability. DNA accessibility is regulated via a complex set of post-translational modifications of histones, also called histone code, and nucleosome remodeling. The sequence is that of Histone H2B (HIS2B) from Nicotiana tabacum (Common tobacco).